A 292-amino-acid chain; its full sequence is NAD kinase (292 aa).

The active-site Proton acceptor is the Asp73. NAD(+)-binding positions include 73–74 (DG), 147–148 (NE), His158, Arg175, Asp177, 188–193 (TAYSLS), and Gln247.

It belongs to the NAD kinase family. A divalent metal cation serves as cofactor.

The protein localises to the cytoplasm. It catalyses the reaction NAD(+) + ATP = ADP + NADP(+) + H(+). Involved in the regulation of the intracellular balance of NAD and NADP, and is a key enzyme in the biosynthesis of NADP. Catalyzes specifically the phosphorylation on 2'-hydroxyl of the adenosine moiety of NAD to yield NADP. This Serratia proteamaculans (strain 568) protein is NAD kinase.